A 492-amino-acid polypeptide reads, in one-letter code: Alpha-amylase-related protein (492 aa).

Residues 1-18 (MRLSLSVLLCLGLALTLA) form the signal peptide. Glutamine 19 carries the post-translational modification Pyrrolidone carboxylic acid. A disulfide bridge connects residues cysteine 46 and cysteine 102. Residues asparagine 116, glutamine 167, and aspartate 176 each contribute to the Ca(2+) site. A disulfide bridge links cysteine 155 with cysteine 169. Arginine 204 contributes to the chloride binding site. The Nucleophile role is filled by aspartate 206. A Ca(2+)-binding site is contributed by histidine 210. Catalysis depends on glutamate 243, which acts as the Proton donor. Residues asparagine 306 and arginine 341 each coordinate chloride. Intrachain disulfides connect cysteine 374/cysteine 380, cysteine 416/cysteine 439, and cysteine 446/cysteine 458.

Belongs to the glycosyl hydrolase 13 family. Monomer. Ca(2+) serves as cofactor. It depends on chloride as a cofactor.

It is found in the secreted. It catalyses the reaction Endohydrolysis of (1-&gt;4)-alpha-D-glucosidic linkages in polysaccharides containing three or more (1-&gt;4)-alpha-linked D-glucose units.. This Drosophila willistoni (Fruit fly) protein is Alpha-amylase-related protein (Amyrel).